Consider the following 278-residue polypeptide: Large ribosomal subunit protein uL24m (278 aa).

A KOW domain is found at 109–142; that stretch reads FFPGDLVQVMVGKDKGRQGLVLTTSRDSSDVIVD.

The protein belongs to the universal ribosomal protein uL24 family.

It localises to the mitochondrion. The sequence is that of Large ribosomal subunit protein uL24m (mrpl-24) from Caenorhabditis elegans.